A 21-amino-acid chain; its full sequence is 20 kDa chaperonin, chloroplastic (21 aa).

It belongs to the GroES chaperonin family. In terms of assembly, forms stable complexes with CPN60 in the presence of ATP.

The protein localises to the plastid. It localises to the chloroplast. Seems to function only as a co-chaperone, along with cpn60, and in certain cases is essential for the discharge of biologically active proteins from cpn60. The polypeptide is 20 kDa chaperonin, chloroplastic (CPN21) (Pisum sativum (Garden pea)).